A 589-amino-acid polypeptide reads, in one-letter code: Kelch-like protein 25 (589 aa).

Residues T46–E114 form the BTB domain. In terms of domain architecture, BACK spans C149 to V250. Kelch repeat units lie at residues T296 to C340, K341 to N388, C389 to L444, L446 to S492, Q493 to N538, and K539 to K585.

In terms of assembly, component of the BCR(KLHL25) E3 ubiquitin ligase complex, at least composed of cul3, klhl25 and rbx1.

It functions in the pathway protein modification; protein ubiquitination. Substrate-specific adapter of a BCR (BTB-CUL3-RBX1) E3 ubiquitin ligase complex involved in various processes, such as translation homeostasis and lipid synthesis. The BCR(KLHL25) ubiquitin ligase complex acts by mediating ubiquitination of hypophosphorylated eif4ebp1 (4E-BP1): ubiquitination and subsequent degradation of hypophosphorylated EIF4EBP1 (4E-BP1) probably serves as a homeostatic mechanism to maintain translation and prevent eIF4E inhibition when eIF4E levels are low. The BCR(KLHL25) complex also acts as a regulator of lipid synthesis by mediating ubiquitination and degradation of ACLY, thereby inhibiting lipid synthesis. In Xenopus tropicalis (Western clawed frog), this protein is Kelch-like protein 25.